The primary structure comprises 422 residues: Ubiquitin-conjugating enzyme E2 Q1 (422 aa).

The residue at position 1 (Met1) is an N-acetylmethionine. Over residues Met1–Ala24 the composition is skewed to low complexity. Disordered regions lie at residues Met1–Cys40 and Gln173–Gly221. Gly residues predominate over residues Pro25–Pro35. Positions Val185 to Asp200 are enriched in acidic residues. Residues Ala212–Gly221 show a composition bias toward basic and acidic residues. The 165-residue stretch at Gln251–Tyr415 folds into the UBC core domain. Cys351 acts as the Glycyl thioester intermediate in catalysis.

This sequence belongs to the ubiquitin-conjugating enzyme family. As to quaternary structure, monomer and homodimer. Only the homodimer is linked to ubiquitin through thiolester activation. Interacts (via N-terminus) with B4GALT1 (via N-terminal cytoplasmic domain); the interaction is direct. Post-translationally, autoubiquitinated in vitro in the presence of NEDD4L. Expressed in liver, brain, heart, spleen, lung, kidney, muscle, ovary, epididymis, testis and placenta. Also expressed in thymus and ES cells. Only expressed in the uterus during pregnancy. Expressed in oocytes and during subsequent embryonic development stages (4-cell stage, blastocyst, 8.5 dpc, 13.5 dpc, 16.5 dpc and 18.5 dpc).

The protein localises to the nucleus. The protein resides in the cell projection. It is found in the filopodium. It localises to the cytoplasm. Its subcellular location is the cytosol. The catalysed reaction is S-ubiquitinyl-[E1 ubiquitin-activating enzyme]-L-cysteine + [E2 ubiquitin-conjugating enzyme]-L-cysteine = [E1 ubiquitin-activating enzyme]-L-cysteine + S-ubiquitinyl-[E2 ubiquitin-conjugating enzyme]-L-cysteine.. The protein operates within protein modification; protein ubiquitination. Functionally, catalyzes the covalent attachment of ubiquitin to other proteins. Involved in female fertility and embryo implantation. May be involved in hormonal homeostasis in females. Involved in regulation of B4GALT1 cell surface expression, B4GALT1-mediated cell adhesion to laminin and embryoid body formation. The polypeptide is Ubiquitin-conjugating enzyme E2 Q1 (Ube2q1) (Mus musculus (Mouse)).